Here is a 267-residue protein sequence, read N- to C-terminus: Hydroxyethylthiazole kinase 2 (267 aa).

Substrate is bound at residue Met-41. ATP contacts are provided by Lys-116 and Thr-166. Gly-193 is a binding site for substrate.

This sequence belongs to the Thz kinase family. Requires Mg(2+) as cofactor.

It carries out the reaction 5-(2-hydroxyethyl)-4-methylthiazole + ATP = 4-methyl-5-(2-phosphooxyethyl)-thiazole + ADP + H(+). Its pathway is cofactor biosynthesis; thiamine diphosphate biosynthesis; 4-methyl-5-(2-phosphoethyl)-thiazole from 5-(2-hydroxyethyl)-4-methylthiazole: step 1/1. In terms of biological role, catalyzes the phosphorylation of the hydroxyl group of 4-methyl-5-beta-hydroxyethylthiazole (THZ). The polypeptide is Hydroxyethylthiazole kinase 2 (Streptococcus pneumoniae (strain Taiwan19F-14)).